We begin with the raw amino-acid sequence, 557 residues long: Proline--tRNA ligase (557 aa).

The protein belongs to the class-II aminoacyl-tRNA synthetase family. ProS type 1 subfamily. As to quaternary structure, homodimer.

It is found in the cytoplasm. The catalysed reaction is tRNA(Pro) + L-proline + ATP = L-prolyl-tRNA(Pro) + AMP + diphosphate. Functionally, catalyzes the attachment of proline to tRNA(Pro) in a two-step reaction: proline is first activated by ATP to form Pro-AMP and then transferred to the acceptor end of tRNA(Pro). As ProRS can inadvertently accommodate and process non-cognate amino acids such as alanine and cysteine, to avoid such errors it has two additional distinct editing activities against alanine. One activity is designated as 'pretransfer' editing and involves the tRNA(Pro)-independent hydrolysis of activated Ala-AMP. The other activity is designated 'posttransfer' editing and involves deacylation of mischarged Ala-tRNA(Pro). The misacylated Cys-tRNA(Pro) is not edited by ProRS. The protein is Proline--tRNA ligase of Baumannia cicadellinicola subsp. Homalodisca coagulata.